We begin with the raw amino-acid sequence, 464 residues long: MMARRDPTSWAKRLVRAQTLQKQRRAPVGPRAPPPDEEDPRLKCKNCGAFGHTARSTRCPMKCWKAALVPATLGKKEGKENLKPWKPRVEANPGPLNKDKGEKEERPRQQDPQRKALLHMFSGKPPEKPLPNGKGSTEPSDYLRVASGPMPVHTTSKRPRLDPVLADRSATEMSGRGSVLASLSPLRKASLSSSSSLGPKERQTGAAADMPQPAVRHQGREPLLVVKPTHSRPEGDCREVPQAASKTHGLLQAARPQAQDKRPAVTSQPCPPAATHSLGLGSNLSFGPGAKRPAQAPIQACLNFPKKPRLGPFQIPESAIQGGELGAPENLQPPPAATELGPSTSPQMGRRTPAQVPSVDRQPPHSRPCLPTAQACTMSHHPAASHDGAQPLRVLFRRLENGRWSSSLLAAPSFHSPEKPGAFLAQSPHVSEKSEAPCVRVPPSVLYEDLQVSSSSEDSDSDLE.

Disordered regions lie at residues 1 to 42, 70 to 389, and 411 to 437; these read MMAR…DPRL, PATL…HDGA, and APSFHSPEKPGAFLAQSPHVSEKSEAP. Composition is skewed to basic and acidic residues over residues 74-89 and 97-114; these read GKKEGKENLKPWKPRV and NKDKGEKEERPRQQDPQR. Residues 180–197 are compositionally biased toward low complexity; the sequence is LASLSPLRKASLSSSSSL.

It belongs to the FAM90 family.

This Homo sapiens (Human) protein is Protein FAM90A14.